Reading from the N-terminus, the 256-residue chain is UPF0246 protein Swoo_1284 (256 aa).

This sequence belongs to the UPF0246 family.

The protein is UPF0246 protein Swoo_1284 of Shewanella woodyi (strain ATCC 51908 / MS32).